The sequence spans 230 residues: Orotidine 5'-phosphate decarboxylase (230 aa).

Residues Asp-11, Lys-34, 61–70 (DLKLHDIPNT), Thr-117, Arg-179, Gln-188, Gly-208, and Arg-209 each bind substrate. The Proton donor role is filled by Lys-63.

The protein belongs to the OMP decarboxylase family. Type 1 subfamily. Homodimer.

It carries out the reaction orotidine 5'-phosphate + H(+) = UMP + CO2. Its pathway is pyrimidine metabolism; UMP biosynthesis via de novo pathway; UMP from orotate: step 2/2. Its function is as follows. Catalyzes the decarboxylation of orotidine 5'-monophosphate (OMP) to uridine 5'-monophosphate (UMP). The chain is Orotidine 5'-phosphate decarboxylase from Streptococcus mutans serotype c (strain ATCC 700610 / UA159).